The following is a 362-amino-acid chain: 3-dehydroquinate synthase (362 aa).

NAD(+) is bound by residues 71-76 (DGEKYK), 105-109 (GVIGD), 129-130 (TT), K142, and K151. Zn(2+) contacts are provided by E184, H248, and H265.

This sequence belongs to the sugar phosphate cyclases superfamily. Dehydroquinate synthase family. It depends on Co(2+) as a cofactor. Zn(2+) is required as a cofactor. Requires NAD(+) as cofactor.

It is found in the cytoplasm. It carries out the reaction 7-phospho-2-dehydro-3-deoxy-D-arabino-heptonate = 3-dehydroquinate + phosphate. The protein operates within metabolic intermediate biosynthesis; chorismate biosynthesis; chorismate from D-erythrose 4-phosphate and phosphoenolpyruvate: step 2/7. Functionally, catalyzes the conversion of 3-deoxy-D-arabino-heptulosonate 7-phosphate (DAHP) to dehydroquinate (DHQ). This is 3-dehydroquinate synthase from Hamiltonella defensa subsp. Acyrthosiphon pisum (strain 5AT).